Reading from the N-terminus, the 416-residue chain is Xyloglucan O-acetyltransferase 1 (416 aa).

Over 1-14 the chain is Cytoplasmic; the sequence is MGLNEQQNVPSQRK. The helical; Signal-anchor for type II membrane protein transmembrane segment at 15–35 threads the bilayer; it reads IIVFIVLAFIPIALFRLCFNN. At 36–416 the chain is on the lumenal side; it reads PFSSIKDTSL…MIEMLRRWKV (381 aa). 4 cysteine pairs are disulfide-bonded: Cys79-Cys129, Cys100-Cys165, Cys109-Cys395, and Cys318-Cys391. A glycan (N-linked (GlcNAc...) asparagine) is linked at Asn96. The GDS motif motif lies at 152–154; the sequence is GDS. Ser154 (nucleophile) is an active-site residue. 3 N-linked (GlcNAc...) asparagine glycosylation sites follow: Asn194, Asn269, and Asn319. Residue Asp390 is the Proton donor of the active site. Residues 390-393 carry the DXXH motif motif; it reads DCLH. His393 (proton acceptor) is an active-site residue.

Belongs to the PC-esterase family. TBL subfamily.

It localises to the golgi apparatus membrane. Xyloglucan acetyltransferase that catalyzes the acetylation of fucosylated Gal residues on xyloglucan side chains. Predominantly catalyze 6-O-monoacetylation of Gal residues in the Fuc-Gal-Xyl trisaccharide side chains of xyloglucan oligomers. Involved in xyloglucan specific O-acetylation in roots and rosette leaves. This is Xyloglucan O-acetyltransferase 1 from Arabidopsis thaliana (Mouse-ear cress).